Reading from the N-terminus, the 512-residue chain is 2,3-bisphosphoglycerate-independent phosphoglycerate mutase (512 aa).

Mn(2+) is bound by residues Asp11 and Ser61. Ser61 functions as the Phosphoserine intermediate in the catalytic mechanism. Residues His122, 152 to 153, Arg184, Arg190, 259 to 262, and Lys332 contribute to the substrate site; these read RD and RADR. Mn(2+)-binding residues include Asp399, His403, Asp440, His441, and His459.

This sequence belongs to the BPG-independent phosphoglycerate mutase family. Monomer. Mn(2+) is required as a cofactor.

It catalyses the reaction (2R)-2-phosphoglycerate = (2R)-3-phosphoglycerate. The protein operates within carbohydrate degradation; glycolysis; pyruvate from D-glyceraldehyde 3-phosphate: step 3/5. Its function is as follows. Catalyzes the interconversion of 2-phosphoglycerate and 3-phosphoglycerate. This chain is 2,3-bisphosphoglycerate-independent phosphoglycerate mutase, found in Francisella tularensis subsp. novicida (strain U112).